A 420-amino-acid polypeptide reads, in one-letter code: ATP phosphoribosyltransferase regulatory subunit (420 aa).

Belongs to the class-II aminoacyl-tRNA synthetase family. HisZ subfamily. In terms of assembly, heteromultimer composed of HisG and HisZ subunits.

It localises to the cytoplasm. It functions in the pathway amino-acid biosynthesis; L-histidine biosynthesis; L-histidine from 5-phospho-alpha-D-ribose 1-diphosphate: step 1/9. In terms of biological role, required for the first step of histidine biosynthesis. May allow the feedback regulation of ATP phosphoribosyltransferase activity by histidine. The chain is ATP phosphoribosyltransferase regulatory subunit from Bacillus mycoides (strain KBAB4) (Bacillus weihenstephanensis).